The sequence spans 150 residues: Large ribosomal subunit protein bL9 (150 aa).

It belongs to the bacterial ribosomal protein bL9 family.

Its function is as follows. Binds to the 23S rRNA. The polypeptide is Large ribosomal subunit protein bL9 (Paraburkholderia phymatum (strain DSM 17167 / CIP 108236 / LMG 21445 / STM815) (Burkholderia phymatum)).